The sequence spans 956 residues: Glycine dehydrogenase (decarboxylating) (956 aa).

Lys697 carries the post-translational modification N6-(pyridoxal phosphate)lysine.

This sequence belongs to the GcvP family. In terms of assembly, the glycine cleavage system is composed of four proteins: P, T, L and H. It depends on pyridoxal 5'-phosphate as a cofactor.

The enzyme catalyses N(6)-[(R)-lipoyl]-L-lysyl-[glycine-cleavage complex H protein] + glycine + H(+) = N(6)-[(R)-S(8)-aminomethyldihydrolipoyl]-L-lysyl-[glycine-cleavage complex H protein] + CO2. In terms of biological role, the glycine cleavage system catalyzes the degradation of glycine. The P protein binds the alpha-amino group of glycine through its pyridoxal phosphate cofactor; CO(2) is released and the remaining methylamine moiety is then transferred to the lipoamide cofactor of the H protein. This chain is Glycine dehydrogenase (decarboxylating), found in Cereibacter sphaeroides (strain KD131 / KCTC 12085) (Rhodobacter sphaeroides).